A 306-amino-acid chain; its full sequence is tRNA N6-adenosine threonylcarbamoyltransferase (306 aa).

2 residues coordinate Fe cation: histidine 110 and histidine 114. Substrate-binding positions include 132–136 (IASGK), aspartate 165, glycine 178, aspartate 182, and asparagine 268. Residue aspartate 292 participates in Fe cation binding.

This sequence belongs to the KAE1 / TsaD family. Fe(2+) is required as a cofactor.

It is found in the cytoplasm. It catalyses the reaction L-threonylcarbamoyladenylate + adenosine(37) in tRNA = N(6)-L-threonylcarbamoyladenosine(37) in tRNA + AMP + H(+). Functionally, required for the formation of a threonylcarbamoyl group on adenosine at position 37 (t(6)A37) in tRNAs that read codons beginning with adenine. Is involved in the transfer of the threonylcarbamoyl moiety of threonylcarbamoyl-AMP (TC-AMP) to the N6 group of A37, together with TsaE and TsaB. TsaD likely plays a direct catalytic role in this reaction. The polypeptide is tRNA N6-adenosine threonylcarbamoyltransferase (Malacoplasma penetrans (strain HF-2) (Mycoplasma penetrans)).